A 495-amino-acid chain; its full sequence is Probable plastidic glucose transporter 3 (495 aa).

12 helical membrane-spanning segments follow: residues 55–75 (LPHV…LGVV), 97–117 (LVVS…GLVA), 131–151 (LPMI…GMLL), 154–174 (FLVG…VTEV), 183–203 (YGSS…FAGI), 214–234 (ICFW…ELCV), 294–314 (VVFI…NAVF), 330–350 (SANI…VVLM), 357–377 (VLLI…AIAY), 384–404 (FGTL…FATG), 425–445 (ALAV…LLFL), and 451–471 (LGSV…VIFV).

This sequence belongs to the major facilitator superfamily. Sugar transporter (TC 2.A.1.1) family.

It localises to the plastid. It is found in the chloroplast membrane. May be involved in the efflux of glucose towards the cytosol. This Arabidopsis thaliana (Mouse-ear cress) protein is Probable plastidic glucose transporter 3.